A 156-amino-acid polypeptide reads, in one-letter code: MFNVILVAPEIPPNTGNVIRLCANTGARLHLIEPLGFPLDDAKMRRAGLDYHEYAEMRVHRDWDAFVAAEAPDPARMFAFTTRGSGRFHDHAFVPGDWFVFGSETRGLPADVLERFPNEQRVRLPMRPGNRSLNLSNTVAVVVFEAWRQAGFEGGA.

S-adenosyl-L-methionine contacts are provided by glycine 102, leucine 124, and serine 132.

It belongs to the class IV-like SAM-binding methyltransferase superfamily. RNA methyltransferase TrmH family. TrmL subfamily. In terms of assembly, homodimer.

It localises to the cytoplasm. The enzyme catalyses cytidine(34) in tRNA + S-adenosyl-L-methionine = 2'-O-methylcytidine(34) in tRNA + S-adenosyl-L-homocysteine + H(+). The catalysed reaction is 5-carboxymethylaminomethyluridine(34) in tRNA(Leu) + S-adenosyl-L-methionine = 5-carboxymethylaminomethyl-2'-O-methyluridine(34) in tRNA(Leu) + S-adenosyl-L-homocysteine + H(+). Methylates the ribose at the nucleotide 34 wobble position in the two leucyl isoacceptors tRNA(Leu)(CmAA) and tRNA(Leu)(cmnm5UmAA). Catalyzes the methyl transfer from S-adenosyl-L-methionine to the 2'-OH of the wobble nucleotide. The polypeptide is tRNA (cytidine(34)-2'-O)-methyltransferase (Burkholderia ambifaria (strain ATCC BAA-244 / DSM 16087 / CCUG 44356 / LMG 19182 / AMMD) (Burkholderia cepacia (strain AMMD))).